The sequence spans 222 residues: MKPTSSAAARNELASDKAAALALTPVSRETERRLDRYIALLLEWQAKTNLVAPSTLPHLWTRHISDSLQLLDLAPEASFWVDLGSGGGFPGVVLACALAERPGAKVHLVERIAKKAAFLREAIRVTGSPGTVHLSEIGDIVEKWSGRVDCVTARALAPLHQLVGFAEPLVKKGAKALFLKGQDVDAELTESTKYWKIEPKLHSSRTGGQGWIVAIDCIERRS.

S-adenosyl-L-methionine contacts are provided by residues Gly84, Phe89, 141-142 (VE), and Arg154.

Belongs to the methyltransferase superfamily. RNA methyltransferase RsmG family.

The protein resides in the cytoplasm. It catalyses the reaction guanosine(527) in 16S rRNA + S-adenosyl-L-methionine = N(7)-methylguanosine(527) in 16S rRNA + S-adenosyl-L-homocysteine. Specifically methylates the N7 position of guanine in position 527 of 16S rRNA. The sequence is that of Ribosomal RNA small subunit methyltransferase G from Bradyrhizobium sp. (strain ORS 278).